The primary structure comprises 382 residues: Carbamoyl phosphate synthase small chain (382 aa).

The CPSase stretch occupies residues 1 to 189 (MIKSALLVLE…GLPEAKSEDD (189 aa)). L-glutamine contacts are provided by S47 and G241. Residues 193–380 (HVVAYDFGAK…IELIKHYRSS (188 aa)) form the Glutamine amidotransferase type-1 domain. C269 (nucleophile) is an active-site residue. L-glutamine contacts are provided by L270, Q273, N311, G313, and F314. Catalysis depends on residues H353 and E355.

It belongs to the CarA family. Composed of two chains; the small (or glutamine) chain promotes the hydrolysis of glutamine to ammonia, which is used by the large (or ammonia) chain to synthesize carbamoyl phosphate. Tetramer of heterodimers (alpha,beta)4.

It carries out the reaction hydrogencarbonate + L-glutamine + 2 ATP + H2O = carbamoyl phosphate + L-glutamate + 2 ADP + phosphate + 2 H(+). The catalysed reaction is L-glutamine + H2O = L-glutamate + NH4(+). Its pathway is amino-acid biosynthesis; L-arginine biosynthesis; carbamoyl phosphate from bicarbonate: step 1/1. It functions in the pathway pyrimidine metabolism; UMP biosynthesis via de novo pathway; (S)-dihydroorotate from bicarbonate: step 1/3. Its function is as follows. Small subunit of the glutamine-dependent carbamoyl phosphate synthetase (CPSase). CPSase catalyzes the formation of carbamoyl phosphate from the ammonia moiety of glutamine, carbonate, and phosphate donated by ATP, constituting the first step of 2 biosynthetic pathways, one leading to arginine and/or urea and the other to pyrimidine nucleotides. The small subunit (glutamine amidotransferase) binds and cleaves glutamine to supply the large subunit with the substrate ammonia. In Salmonella typhi, this protein is Carbamoyl phosphate synthase small chain.